Reading from the N-terminus, the 410-residue chain is Inositol hexakisphosphate kinase 3 (410 aa).

211 to 219 provides a ligand contact to substrate; the sequence is PCVLDLKMG. A disordered region spans residues 333–358; the sequence is QEPPERAPGSPHPHEAPQAAHGSSPG.

It belongs to the inositol phosphokinase (IPK) family. In terms of tissue distribution, detected in brain.

It is found in the cytoplasm. The catalysed reaction is 1D-myo-inositol hexakisphosphate + ATP = 5-diphospho-1D-myo-inositol 1,2,3,4,6-pentakisphosphate + ADP. The enzyme catalyses 1-diphospho-1D-myo-inositol 2,3,4,5,6-pentakisphosphate + ATP + H(+) = 1,5-bis(diphospho)-1D-myo-inositol 2,3,4,6-tetrakisphosphate + ADP. Converts inositol hexakisphosphate (InsP6) to diphosphoinositol pentakisphosphate (InsP7/PP-InsP5). Converts 1,3,4,5,6-pentakisphosphate (InsP5) to PP-InsP4. The polypeptide is Inositol hexakisphosphate kinase 3 (IP6K3) (Homo sapiens (Human)).